A 255-amino-acid polypeptide reads, in one-letter code: 5'-nucleotidase SurE (255 aa).

4 residues coordinate a divalent metal cation: aspartate 8, aspartate 9, serine 40, and asparagine 92.

Belongs to the SurE nucleotidase family. A divalent metal cation is required as a cofactor.

The protein localises to the cytoplasm. The enzyme catalyses a ribonucleoside 5'-phosphate + H2O = a ribonucleoside + phosphate. Its function is as follows. Nucleotidase that shows phosphatase activity on nucleoside 5'-monophosphates. The sequence is that of 5'-nucleotidase SurE from Brucella suis (strain ATCC 23445 / NCTC 10510).